The primary structure comprises 118 residues: Large ribosomal subunit protein bL19 (118 aa).

This sequence belongs to the bacterial ribosomal protein bL19 family.

In terms of biological role, this protein is located at the 30S-50S ribosomal subunit interface and may play a role in the structure and function of the aminoacyl-tRNA binding site. This Teredinibacter turnerae (strain ATCC 39867 / T7901) protein is Large ribosomal subunit protein bL19.